Reading from the N-terminus, the 121-residue chain is MARIAGVDIPRDKRVVISLTYIFGIGRTTAQQVLKEAGVSEDTRVRDLTEEELGKIRDIIDKLKVEGDLRREVSLNIKRLIEIGSYRGIRHRRGLPVRGQNSKNNARTRKGPRRTVANKKK.

The disordered stretch occupies residues 93 to 121; it reads RGLPVRGQNSKNNARTRKGPRRTVANKKK. Over residues 106–121 the composition is skewed to basic residues; sequence ARTRKGPRRTVANKKK.

This sequence belongs to the universal ribosomal protein uS13 family. In terms of assembly, part of the 30S ribosomal subunit. Forms a loose heterodimer with protein S19. Forms two bridges to the 50S subunit in the 70S ribosome.

Located at the top of the head of the 30S subunit, it contacts several helices of the 16S rRNA. In the 70S ribosome it contacts the 23S rRNA (bridge B1a) and protein L5 of the 50S subunit (bridge B1b), connecting the 2 subunits; these bridges are implicated in subunit movement. Contacts the tRNAs in the A and P-sites. The sequence is that of Small ribosomal subunit protein uS13 from Bacillus subtilis (strain 168).